Reading from the N-terminus, the 142-residue chain is Hemoglobin subunit alpha (142 aa).

Residues 2–142 (VLSAADKGHV…VSTVLTSKYR (141 aa)) enclose the Globin domain. Residue serine 4 is modified to Phosphoserine. 2 positions are modified to N6-succinyllysine: lysine 8 and lysine 12. Lysine 17 carries the post-translational modification N6-acetyllysine; alternate. The residue at position 17 (lysine 17) is an N6-succinyllysine; alternate. Tyrosine 25 carries the post-translational modification Phosphotyrosine. Phosphoserine is present on serine 36. An N6-succinyllysine modification is found at lysine 41. The residue at position 50 (serine 50) is a Phosphoserine. Residue histidine 59 participates in O2 binding. Heme b is bound at residue histidine 88. Phosphoserine is present on serine 103. At threonine 109 the chain carries Phosphothreonine. The residue at position 125 (serine 125) is a Phosphoserine. Threonine 135 and threonine 138 each carry phosphothreonine. The residue at position 139 (serine 139) is a Phosphoserine.

This sequence belongs to the globin family. As to quaternary structure, heterotetramer of two alpha chains and two beta chains. In terms of tissue distribution, red blood cells.

Its function is as follows. Involved in oxygen transport from the lung to the various peripheral tissues. Functionally, hemopressin acts as an antagonist peptide of the cannabinoid receptor CNR1. Hemopressin-binding efficiently blocks cannabinoid receptor CNR1 and subsequent signaling. The sequence is that of Hemoglobin subunit alpha (HBA) from Notamacropus eugenii (Tammar wallaby).